The following is a 392-amino-acid chain: Ribosomal RNA large subunit methyltransferase G (392 aa).

It belongs to the methyltransferase superfamily. RlmG family.

It localises to the cytoplasm. It catalyses the reaction guanosine(1835) in 23S rRNA + S-adenosyl-L-methionine = N(2)-methylguanosine(1835) in 23S rRNA + S-adenosyl-L-homocysteine + H(+). Its function is as follows. Specifically methylates the guanine in position 1835 (m2G1835) of 23S rRNA. In Shewanella frigidimarina (strain NCIMB 400), this protein is Ribosomal RNA large subunit methyltransferase G.